Here is a 340-residue protein sequence, read N- to C-terminus: 4-dimethylallyltryptophan N-methyltransferase easF (340 aa).

This sequence belongs to the methyltransferase superfamily. In terms of assembly, homodimer.

The catalysed reaction is 4-(3-methylbut-2-enyl)-L-tryptophan + S-adenosyl-L-methionine = 4-(3-methylbut-2-enyl)-L-abrine + S-adenosyl-L-homocysteine + H(+). It participates in alkaloid biosynthesis; ergot alkaloid biosynthesis. Functionally, 4-dimethylallyltryptophan N-methyltransferase; part of the gene cluster that mediates the biosynthesis of fungal ergot alkaloid. DmaW catalyzes the first step of ergot alkaloid biosynthesis by condensing dimethylallyl diphosphate (DMAP) and tryptophan to form 4-dimethylallyl-L-tryptophan. The second step is catalyzed by the methyltransferase easF that methylates 4-dimethylallyl-L-tryptophan in the presence of S-adenosyl-L-methionine, resulting in the formation of 4-dimethylallyl-L-abrine. The catalase easC and the FAD-dependent oxidoreductase easE then transform 4-dimethylallyl-L-abrine to chanoclavine-I which is further oxidized by easD in the presence of NAD(+), resulting in the formation of chanoclavine-I aldehyde. Chanoclavine-I aldehyde is the precursor of ergoamides and ergopeptines in Clavicipitaceae, and clavine-type alcaloids such as fumiclavine in Trichocomaceae. However, the metabolites downstream of chanoclavine-I aldehyde in Arthrodermataceae have not been identified yet. This Trichophyton verrucosum (strain HKI 0517) protein is 4-dimethylallyltryptophan N-methyltransferase easF.